The following is a 442-amino-acid chain: Histidinol dehydrogenase (442 aa).

The segment at 1-20 is disordered; it reads MLNVTDLRGQTPSKSDIRRA. NAD(+) contacts are provided by Tyr-129, Gln-193, and Asn-218. Residues Thr-241, Gln-263, and His-266 each contribute to the substrate site. Residues Gln-263 and His-266 each contribute to the Zn(2+) site. Active-site proton acceptor residues include Glu-332 and His-333. Positions 333, 366, 420, and 425 each coordinate substrate. Residue Asp-366 coordinates Zn(2+). A Zn(2+)-binding site is contributed by His-425.

Belongs to the histidinol dehydrogenase family. Requires Zn(2+) as cofactor.

The catalysed reaction is L-histidinol + 2 NAD(+) + H2O = L-histidine + 2 NADH + 3 H(+). It participates in amino-acid biosynthesis; L-histidine biosynthesis; L-histidine from 5-phospho-alpha-D-ribose 1-diphosphate: step 9/9. In terms of biological role, catalyzes the sequential NAD-dependent oxidations of L-histidinol to L-histidinaldehyde and then to L-histidine. This is Histidinol dehydrogenase from Corynebacterium glutamicum (strain ATCC 13032 / DSM 20300 / JCM 1318 / BCRC 11384 / CCUG 27702 / LMG 3730 / NBRC 12168 / NCIMB 10025 / NRRL B-2784 / 534).